A 177-amino-acid polypeptide reads, in one-letter code: uncharacterized protein (177 aa).

Residues 1–22 (MCGVVVVIVALVPADPLLPAFA) form the signal peptide. 3 consecutive transmembrane segments (helical) span residues 31 to 51 (VFIPFFNISSSIILICSTCVF), 94 to 114 (ISLMPSFLFPFATLLCLLKFV), and 136 to 156 (LFPIMLIPPPFLTSSSFLLEI).

It localises to the membrane. This is an uncharacterized protein from Saccharomyces cerevisiae (strain ATCC 204508 / S288c) (Baker's yeast).